We begin with the raw amino-acid sequence, 665 residues long: UvrABC system protein B (665 aa).

A Helicase ATP-binding domain is found at 25 to 178 (ASLQAEHRFQ…RQLLRDLTTI (154 aa)). An ATP-binding site is contributed by 38-45 (GATGTGKT). A Beta-hairpin motif is present at residues 91–114 (YYDYYQPEAYIPVTDTYIEKTAAI). The Helicase C-terminal domain occupies 429 to 595 (QVDDLLGEVR…PIVKKASNAI (167 aa)). The UVR domain maps to 626–661 (PELITQLEAQMKEAAKKLEFEEAAKYRDRIKQLRDK).

It belongs to the UvrB family. In terms of assembly, forms a heterotetramer with UvrA during the search for lesions. Interacts with UvrC in an incision complex.

It is found in the cytoplasm. Its function is as follows. The UvrABC repair system catalyzes the recognition and processing of DNA lesions. A damage recognition complex composed of 2 UvrA and 2 UvrB subunits scans DNA for abnormalities. Upon binding of the UvrA(2)B(2) complex to a putative damaged site, the DNA wraps around one UvrB monomer. DNA wrap is dependent on ATP binding by UvrB and probably causes local melting of the DNA helix, facilitating insertion of UvrB beta-hairpin between the DNA strands. Then UvrB probes one DNA strand for the presence of a lesion. If a lesion is found the UvrA subunits dissociate and the UvrB-DNA preincision complex is formed. This complex is subsequently bound by UvrC and the second UvrB is released. If no lesion is found, the DNA wraps around the other UvrB subunit that will check the other stand for damage. This chain is UvrABC system protein B, found in Cyanothece sp. (strain PCC 7425 / ATCC 29141).